A 350-amino-acid chain; its full sequence is MTTTTVTPTPLAEKTALAPKAELHIHIEGSLEPELIFALAERNGVKLAYDSIDALRAAYAFTDLQSFLDIYYAGASVLLHEQDFYDMTMAYVERCLADNVIHSEIFFDPQTHTERGVPIATVVAGIERALADAEKRGMTSKLILCFLRHLSEEDALATFEEALPLFEQYKHRLIGVGLDSSERGHPPSKFERVFAKARALGLKLVAHAGEEGPPSYIYEALDLLKVDRVDHGVRSIEDPALVTRLADSRVALTVCPLSNLKLCVFDDLTKHTLKDLLDRGVAVTVNSDDPAYFGGYVNANYFATIDALKLNDAEVYTIIRNSFEASFVTPEQRSELIAKLDAHWHPSGPH.

Residues His-24, His-26, and His-207 each coordinate Zn(2+). Catalysis depends on Glu-210, which acts as the Proton donor. Residue Asp-288 participates in Zn(2+) binding. Asp-289 is a binding site for substrate.

The protein belongs to the metallo-dependent hydrolases superfamily. Adenosine and AMP deaminases family. Adenine deaminase type 2 subfamily. Zn(2+) is required as a cofactor.

The enzyme catalyses adenine + H2O + H(+) = hypoxanthine + NH4(+). Catalyzes the hydrolytic deamination of adenine to hypoxanthine. Plays an important role in the purine salvage pathway and in nitrogen catabolism. The chain is Adenine deaminase from Paraburkholderia phytofirmans (strain DSM 17436 / LMG 22146 / PsJN) (Burkholderia phytofirmans).